The following is a 555-amino-acid chain: Urocanate hydratase (555 aa).

NAD(+) is bound by residues 51–52 (GG), Gln129, 175–177 (GMG), Glu195, Arg200, 241–242 (NA), 262–266 (QTSAH), 272–273 (YL), and Tyr321. Cys409 is an active-site residue. Gly491 is a binding site for NAD(+).

It belongs to the urocanase family. NAD(+) is required as a cofactor.

It localises to the cytoplasm. The enzyme catalyses 4-imidazolone-5-propanoate = trans-urocanate + H2O. It functions in the pathway amino-acid degradation; L-histidine degradation into L-glutamate; N-formimidoyl-L-glutamate from L-histidine: step 2/3. In terms of biological role, catalyzes the conversion of urocanate to 4-imidazolone-5-propionate. This Rhizorhabdus wittichii (strain DSM 6014 / CCUG 31198 / JCM 15750 / NBRC 105917 / EY 4224 / RW1) (Sphingomonas wittichii) protein is Urocanate hydratase.